Here is a 288-residue protein sequence, read N- to C-terminus: Putative transcription factor kapC (288 aa).

The segment covering 1 to 10 has biased composition (pro residues); it reads MQPTLAPAPH. The disordered stretch occupies residues 1–121; sequence MQPTLAPAPH…AAQRAFRQRK (121 aa). Residues 26–41 are compositionally biased toward low complexity; that stretch reads HDQLLAAHQHLSHPQQ. Pro residues predominate over residues 42 to 54; the sequence is ARPPPPPPQPPHM. Polar residues predominate over residues 84 to 93; that stretch reads QPDLSGQESP. Residues 100 to 163 enclose the bZIP domain; it reads PLSTSKRAAQ…EYIINLQSRL (64 aa). The basic motif stretch occupies residues 101-124; it reads LSTSKRAAQNRAAQRAFRQRKEAH. A compositionally biased stretch (low complexity) spans 106 to 116; sequence RAAQNRAAQRA. The interval 128 to 159 is leucine-zipper; the sequence is LEGKVKAYETMGEAIKALQAENYQLREYIINL. Disordered stretches follow at residues 172-226 and 242-288; these read ELPG…NDDM and PPTE…PLIS. Positions 202 to 212 are enriched in pro residues; that stretch reads PVPPPTAPQQP. Over residues 213–222 the composition is skewed to low complexity; that stretch reads QPAQNQASAP.

Belongs to the bZIP family.

It localises to the nucleus. Putative transcription factor. The sequence is that of Putative transcription factor kapC (kapC) from Aspergillus clavatus (strain ATCC 1007 / CBS 513.65 / DSM 816 / NCTC 3887 / NRRL 1 / QM 1276 / 107).